Here is a 1407-residue protein sequence, read N- to C-terminus: Enhancer of mRNA-decapping protein 4 (1407 aa).

Alanine 2 carries the post-translational modification N-acetylalanine. Phosphoserine occurs at positions 3 and 6. Lysine 125 is modified (N6-acetyllysine). WD repeat units lie at residues 174–214 (GFTG…GKIQ), 230–277 (NHFR…SSHS), 295–334 (GHSTCLSEGALSPDGTVLATASHDGFVKFWQIYIEGQDEP), and 342–393 (PHDG…CLQT). The segment at 547 to 566 (GESRPELGSEGLASAPHGSQ) is disordered. Phosphoserine is present on residues serine 560, serine 565, serine 583, and serine 585. Disordered regions lie at residues 604-632 (SLQQISASPSSSSSSSSSSSSSSSSSSSS) and 673-745 (SSSS…STAL). Composition is skewed to low complexity over residues 609-632 (SASPSSSSSSSSSSSSSSSSSSSS) and 673-693 (SSSSSLQASPRSLLPGLLPGP). Phosphoserine is present on residues serine 681, serine 713, serine 728, and serine 730. Positions 727–745 (ASPSRTRSPDVISSASTAL) are enriched in polar residues. A Phosphothreonine modification is found at threonine 732. Residues serine 734 and serine 746 each carry the phosphoserine modification. The interval 787 to 817 (PRPRQGPELSSQLGLDGGPGDGDRHSTPSLL) is disordered. The residue at position 827 (threonine 827) is a Phosphothreonine. A phosphoserine mark is found at serine 850 and serine 877. The tract at residues 875–951 (HDSQDTSAEQ…SRLTEHQVVE (77 aa)) is disordered. Position 880 is a phosphothreonine (threonine 880). 5 positions are modified to phosphoserine: serine 881, serine 885, serine 893, serine 896, and serine 898. Threonine 907 carries the phosphothreonine modification. Positions 972–1031 (HNQEELLQRLCAQLEGLQSTVTDHVERALETRHEQEQRRLERALAEGQQRGGQLQEQLTQ) form a coiled coil. The residue at position 1386 (serine 1386) is a Phosphoserine.

Belongs to the WD repeat EDC4 family. As to quaternary structure, part of a decapping complex consisting of DCP1A, DCP2, EDC3, EDC4 and probably DDX6. Part of a complex consisting of DCP1A, EDC3, EDC4 and DDX6. Part of a complex consisting of DCP1B, EDC3, EDC4 and DDX6. Interacts with DCP2. Interacts with NBDY. Interacts with Tex19.1. Interacts with LSM14A. Interacts with DDX6.

It localises to the cytoplasm. The protein localises to the P-body. It is found in the nucleus. Functionally, in the process of mRNA degradation, seems to play a role in mRNA decapping. Component of a complex containing DCP2 and DCP1A which functions in decapping of ARE-containing mRNAs. Promotes complex formation between DCP1A and DCP2. Enhances the catalytic activity of DCP2 (in vitro). The chain is Enhancer of mRNA-decapping protein 4 (Edc4) from Rattus norvegicus (Rat).